The primary structure comprises 252 residues: Cell division protein ZapD (252 aa).

This sequence belongs to the ZapD family. As to quaternary structure, interacts with FtsZ.

The protein resides in the cytoplasm. Its function is as follows. Cell division factor that enhances FtsZ-ring assembly. Directly interacts with FtsZ and promotes bundling of FtsZ protofilaments, with a reduction in FtsZ GTPase activity. The sequence is that of Cell division protein ZapD from Cupriavidus necator (strain ATCC 17699 / DSM 428 / KCTC 22496 / NCIMB 10442 / H16 / Stanier 337) (Ralstonia eutropha).